Reading from the N-terminus, the 149-residue chain is 3-dehydroquinate dehydratase (149 aa).

Tyrosine 21 (proton acceptor) is an active-site residue. Positions 73, 79, and 86 each coordinate substrate. Catalysis depends on histidine 99, which acts as the Proton donor. Substrate contacts are provided by residues 100–101 (LT) and arginine 110.

It belongs to the type-II 3-dehydroquinase family. In terms of assembly, homododecamer.

It catalyses the reaction 3-dehydroquinate = 3-dehydroshikimate + H2O. It functions in the pathway metabolic intermediate biosynthesis; chorismate biosynthesis; chorismate from D-erythrose 4-phosphate and phosphoenolpyruvate: step 3/7. Functionally, catalyzes a trans-dehydration via an enolate intermediate. The sequence is that of 3-dehydroquinate dehydratase from Thermus thermophilus (strain ATCC BAA-163 / DSM 7039 / HB27).